Consider the following 428-residue polypeptide: L-fucose-proton symporter (428 aa).

12 helical membrane-spanning segments follow: residues 10–30, 51–71, 78–98, 100–120, 147–167, 204–224, 250–270, 288–308, 311–331, 339–359, 371–391, and 401–421; these read FIVP…ANDI, LVQL…ALFA, AGIL…WPAA, YEIF…LAFL, FNPL…LTNL, IALG…KMPA, EGVI…TFIV, IIAM…MKYL, EFML…VIFI, CLIL…GIAL, AGLV…GMII, and AVNF…IYGF.

The protein belongs to the major facilitator superfamily. FHS transporter (TC 2.A.1.7) family.

It localises to the cell inner membrane. It carries out the reaction L-fucose(in) + H(+)(in) = L-fucose(out) + H(+)(out). Its function is as follows. Mediates the uptake of L-fucose across the boundary membrane with the concomitant transport of protons into the cell (symport system). In Haemophilus influenzae (strain ATCC 51907 / DSM 11121 / KW20 / Rd), this protein is L-fucose-proton symporter (fucP).